Here is a 287-residue protein sequence, read N- to C-terminus: Phosphatidylserine decarboxylase proenzyme (287 aa).

Active-site charge relay system; for autoendoproteolytic cleavage activity residues include Asp-90, His-147, and Ser-252. Ser-252 (schiff-base intermediate with substrate; via pyruvic acid; for decarboxylase activity) is an active-site residue. Ser-252 carries the pyruvic acid (Ser); by autocatalysis modification.

Belongs to the phosphatidylserine decarboxylase family. PSD-B subfamily. Prokaryotic type I sub-subfamily. As to quaternary structure, heterodimer of a large membrane-associated beta subunit and a small pyruvoyl-containing alpha subunit. The cofactor is pyruvate. Is synthesized initially as an inactive proenzyme. Formation of the active enzyme involves a self-maturation process in which the active site pyruvoyl group is generated from an internal serine residue via an autocatalytic post-translational modification. Two non-identical subunits are generated from the proenzyme in this reaction, and the pyruvate is formed at the N-terminus of the alpha chain, which is derived from the carboxyl end of the proenzyme. The autoendoproteolytic cleavage occurs by a canonical serine protease mechanism, in which the side chain hydroxyl group of the serine supplies its oxygen atom to form the C-terminus of the beta chain, while the remainder of the serine residue undergoes an oxidative deamination to produce ammonia and the pyruvoyl prosthetic group on the alpha chain. During this reaction, the Ser that is part of the protease active site of the proenzyme becomes the pyruvoyl prosthetic group, which constitutes an essential element of the active site of the mature decarboxylase.

The protein localises to the cell membrane. It catalyses the reaction a 1,2-diacyl-sn-glycero-3-phospho-L-serine + H(+) = a 1,2-diacyl-sn-glycero-3-phosphoethanolamine + CO2. It participates in phospholipid metabolism; phosphatidylethanolamine biosynthesis; phosphatidylethanolamine from CDP-diacylglycerol: step 2/2. Functionally, catalyzes the formation of phosphatidylethanolamine (PtdEtn) from phosphatidylserine (PtdSer). The protein is Phosphatidylserine decarboxylase proenzyme of Pseudomonas entomophila (strain L48).